The sequence spans 472 residues: Levansucrase (472 aa).

Positions 1 to 29 (MNIKKIVKQATVLTFTTALLAGGATQAFA) are cleaved as a signal peptide. Tryptophan 85, aspartate 86, and serine 164 together coordinate sucrose. Catalysis depends on aspartate 86, which acts as the Nucleophile. Aspartate 241 lines the Ca(2+) pocket. Sucrose is bound by residues arginine 246 and aspartate 247. Ca(2+)-binding residues include glutamine 272, leucine 308, asparagine 310, and aspartate 339. Glutamate 340 serves as a coordination point for sucrose. The active-site Proton donor/acceptor is the glutamate 342. Arginine 360 is a binding site for sucrose.

The protein belongs to the glycosyl hydrolase 68 family.

The protein resides in the secreted. The catalysed reaction is [6)-beta-D-fructofuranosyl-(2-&gt;](n) alpha-D-glucopyranoside + sucrose = [6)-beta-D-fructofuranosyl-(2-&gt;](n+1) alpha-D-glucopyranoside + D-glucose. Ca(2+) may play an important structural role and promote stability of levansucrase. Catalyzes the synthesis of levan, a fructose polymer, by transferring the fructosyl moiety from sucrose to a growing acceptor molecule. Also displays sucrose hydrolase activity. In Bacillus amyloliquefaciens (Bacillus velezensis), this protein is Levansucrase.